The following is a 236-amino-acid chain: uncharacterized protein (236 aa).

The chain crosses the membrane as a helical span at residues 15-34 (GGMAHIISEAVIAGSIGLYF). Residues 36–71 (KKISALEQTVQELQSQLEVQNNQLQWLIQQQTRRLA) are a coiled coil. Disordered regions lie at residues 83 to 113 (SPLP…FQFK) and 185 to 236 (ATTQ…IDCE). 2 stretches are compositionally biased toward polar residues: residues 93 to 102 (QQSTTTNAAG) and 185 to 195 (ATTQVSTFSKP). A compositionally biased stretch (basic and acidic residues) spans 225–236 (ALDKILNDIDCE).

Its subcellular location is the membrane. This is an uncharacterized protein from Aedes vexans (Inland floodwater mosquito).